The chain runs to 338 residues: UDP-glucose 4-epimerase (338 aa).

NAD(+) is bound by residues 11 to 12, 31 to 36, 58 to 59, 80 to 84, Asn99, Ser124, Tyr149, Lys153, and Phe178; these read YI, DNLCNS, DI, and FAGLK. Substrate is bound by residues Ser124 and Tyr149. Catalysis depends on Tyr149, which acts as the Proton acceptor. Substrate contacts are provided by residues Asn179, 199–200, 216–218, Arg231, 292–295, and Tyr299; these read NL, AIF, and REGD.

Belongs to the NAD(P)-dependent epimerase/dehydratase family. Homodimer. Requires NAD(+) as cofactor.

It carries out the reaction UDP-alpha-D-glucose = UDP-alpha-D-galactose. It functions in the pathway carbohydrate metabolism; galactose metabolism. In terms of biological role, involved in the metabolism of galactose. Catalyzes the conversion of UDP-galactose (UDP-Gal) to UDP-glucose (UDP-Glc) through a mechanism involving the transient reduction of NAD. The chain is UDP-glucose 4-epimerase (galE) from Yersinia pestis.